Reading from the N-terminus, the 164-residue chain is Large ribosomal subunit protein eL21x/eL21w (164 aa).

Belongs to the eukaryotic ribosomal protein eL21 family.

The chain is Large ribosomal subunit protein eL21x/eL21w (RPL21E) from Arabidopsis thaliana (Mouse-ear cress).